We begin with the raw amino-acid sequence, 155 residues long: 6,7-dimethyl-8-ribityllumazine synthase (155 aa).

5-amino-6-(D-ribitylamino)uracil is bound by residues tryptophan 23, 57 to 59 (AWE), and 81 to 83 (CVI). 86–87 (DT) is a binding site for (2S)-2-hydroxy-3-oxobutyl phosphate. Histidine 89 acts as the Proton donor in catalysis. Asparagine 114 serves as a coordination point for 5-amino-6-(D-ribitylamino)uracil. (2S)-2-hydroxy-3-oxobutyl phosphate is bound at residue arginine 128.

Belongs to the DMRL synthase family. In terms of assembly, forms an icosahedral capsid composed of 60 subunits, arranged as a dodecamer of pentamers.

It carries out the reaction (2S)-2-hydroxy-3-oxobutyl phosphate + 5-amino-6-(D-ribitylamino)uracil = 6,7-dimethyl-8-(1-D-ribityl)lumazine + phosphate + 2 H2O + H(+). It participates in cofactor biosynthesis; riboflavin biosynthesis; riboflavin from 2-hydroxy-3-oxobutyl phosphate and 5-amino-6-(D-ribitylamino)uracil: step 1/2. Catalyzes the formation of 6,7-dimethyl-8-ribityllumazine by condensation of 5-amino-6-(D-ribitylamino)uracil with 3,4-dihydroxy-2-butanone 4-phosphate. This is the penultimate step in the biosynthesis of riboflavin. The polypeptide is 6,7-dimethyl-8-ribityllumazine synthase (Stenotrophomonas maltophilia (strain R551-3)).